Reading from the N-terminus, the 508-residue chain is Photosystem II CP47 reaction center protein (508 aa).

The next 6 membrane-spanning stretches (helical) occupy residues 21–36 (SVHI…WAGS), 101–115 (IVFS…IWHW), 140–156 (GIHL…FGAF), 203–218 (IAAG…FHLS), 237–252 (VLSS…AFVV), and 457–472 (SFAL…HGAR).

It belongs to the PsbB/PsbC family. PsbB subfamily. PSII is composed of 1 copy each of membrane proteins PsbA, PsbB, PsbC, PsbD, PsbE, PsbF, PsbH, PsbI, PsbJ, PsbK, PsbL, PsbM, PsbT, PsbX, PsbY, PsbZ, Psb30/Ycf12, at least 3 peripheral proteins of the oxygen-evolving complex and a large number of cofactors. It forms dimeric complexes. The cofactor is Binds multiple chlorophylls. PSII binds additional chlorophylls, carotenoids and specific lipids..

The protein localises to the plastid. It localises to the chloroplast thylakoid membrane. In terms of biological role, one of the components of the core complex of photosystem II (PSII). It binds chlorophyll and helps catalyze the primary light-induced photochemical processes of PSII. PSII is a light-driven water:plastoquinone oxidoreductase, using light energy to abstract electrons from H(2)O, generating O(2) and a proton gradient subsequently used for ATP formation. This chain is Photosystem II CP47 reaction center protein, found in Gossypium hirsutum (Upland cotton).